The chain runs to 790 residues: PGC-1 and ERR-induced regulator in muscle protein 1 (790 aa).

Disordered stretches follow at residues 38-391 (LLSS…TPIS), 425-449 (VASS…STPV), 507-545 (SVAG…EAVA), and 626-648 (QRSR…APIP). The span at 40–52 (SSDIDQGDSSGSS) shows a compositional bias: low complexity. Composition is skewed to polar residues over residues 80–89 (ATQQPVSRSQ) and 98–107 (TGQQTPSTSA). Residues 111 to 123 (APPSLGPGASPPS) show a composition bias toward low complexity. Positions 146–157 (APRPPGEPPGSP) are enriched in pro residues. Low complexity predominate over residues 158 to 169 (KSPGHSTGSQRP). The segment covering 170–179 (PDSPGAPPRS) has biased composition (pro residues). Over residues 366–391 (KPQSDTAVSTPASEPQSSVALSTPIS) the composition is skewed to polar residues. Residues 515-532 (KPGSGQASARPSAPQTAT) show a composition bias toward polar residues. Residues 635–648 (EPLPRADPVPAPIP) show a composition bias toward pro residues.

Muscle-specific expression is increased by endurance exercise.

It is found in the cytoplasm. The protein resides in the nucleus. Regulates the expression of selective PPARGC1A/B and ESRRA/B/G target genes with roles in glucose and lipid metabolism, energy transfer, contractile function, muscle mitochondrial biogenesis and oxidative capacity. Required for the efficient induction of MT-CO2, MT-CO3, COX4I1, TFB1M, TFB2M, POLRMT and SIRT3 by PPARGC1A. Positively regulates the PPARGC1A/ESRRG-induced expression of CKMT2, TNNI3 and SLC2A4 and negatively regulates the PPARGC1A/ESRRG-induced expression of PDK4. The sequence is that of PGC-1 and ERR-induced regulator in muscle protein 1 (PERM1) from Homo sapiens (Human).